The sequence spans 1122 residues: Histidine kinase CKI1 (1122 aa).

The Cytoplasmic segment spans residues methionine 1–arginine 12. Residues proline 13 to serine 33 form a helical membrane-spanning segment. The Extracellular portion of the chain corresponds to asparagine 34–glutamine 345. A helical membrane pass occupies residues leucine 346–methionine 366. The Cytoplasmic portion of the chain corresponds to glutamine 367–histidine 1122. The Histidine kinase domain occupies asparagine 402–threonine 671. Residue histidine 405 is modified to Phosphohistidine; by autocatalysis. Basic and acidic residues predominate over residues alanine 918 to glutamate 928. A disordered region spans residues alanine 918–glutamate 981. Positions arginine 987–lysine 1120 constitute a Response regulatory domain. 4-aspartylphosphate is present on aspartate 1050.

Homodimer. Interacts with AHP2 and AHP3. In terms of tissue distribution, expressed in vascular tissues of inflorescence stems and floral organs, especially in procambium cells, and in siliques.

It localises to the cell membrane. It catalyses the reaction ATP + protein L-histidine = ADP + protein N-phospho-L-histidine.. Functionally, essential protein. Functions as a histidine kinase and transmits the stress signal to a downstream MAPK cascade. This protein undergoes an ATP-dependent autophosphorylation at a conserved histidine residue in the kinase core, and a phosphoryl group is then transferred to a conserved aspartate residue in the receiver domain. Required for the development of megagametophyte in female gametophyte (embryo sac) independently of cytokinin. Contributes to vascular bundle formation and secondary growth in a cytokinin-independent manner, probably by promoting the maintenance of mitotic activity and/or identity of procambial cells. Seems to influence and promote the cytokinin signaling pathway. In Arabidopsis thaliana (Mouse-ear cress), this protein is Histidine kinase CKI1 (CKI1).